The chain runs to 285 residues: Kanamycin B dioxygenase (285 aa).

It belongs to the PhyH family. Fe cation serves as cofactor.

The catalysed reaction is kanamycin B + 2-oxoglutarate + O2 = 2'-dehydrokanamycin A + succinate + NH4(+) + CO2. It participates in antibiotic biosynthesis; kanamycin biosynthesis. Its function is as follows. Mediates the conversion of kanamycin B into 2'-dehydrokanamycin A during the transformation of kanamycin B to kanamycin A. The chain is Kanamycin B dioxygenase (kanJ) from Streptomyces kanamyceticus.